Consider the following 162-residue polypeptide: Interleukin-15 (162 aa).

A signal peptide spans methionine 1–alanine 29. Residues glycine 30–alanine 48 constitute a propeptide that is removed on maturation. Intrachain disulfides connect cysteine 83/cysteine 133 and cysteine 90/cysteine 136. N-linked (GlcNAc...) asparagine glycosylation is found at asparagine 108, asparagine 119, asparagine 127, and asparagine 143.

The protein belongs to the IL-15/IL-21 family. As to expression, expressed in many tissues including heart, spleen, lung, liver, muscle and kidney (at mRNA level). Expressed in many tissues including heart, spleen, lung, liver, muscle and kidney (at protein level).

It is found in the secreted. Cytokine that plays a major role in the development of inflammatory and protective immune responses to microbial invaders and parasites by modulating immune cells of both the innate and adaptive immune systems. Stimulates the proliferation of natural killer cells, T-cells and B-cells and promotes the secretion of several cytokines. In monocytes, induces the production of IL8 and monocyte chemotactic protein 1/CCL2, two chemokines that attract neutrophils and monocytes respectively to sites of infection. Unlike most cytokines, which are secreted in soluble form, IL15 is expressed in association with its high affinity IL15RA on the surface of IL15-producing cells and delivers signals to target cells that express IL2RB and IL2RG receptor subunits. Binding to its receptor triggers the phosphorylation of JAK1 and JAK3 and the recruitment and subsequent phosphorylation of signal transducer and activator of transcription-3/STAT3 and STAT5. In mast cells, induces the rapid tyrosine phosphorylation of STAT6 and thereby controls mast cell survival and release of cytokines such as IL4. The sequence is that of Interleukin-15 (IL15) from Oryctolagus cuniculus (Rabbit).